An 89-amino-acid polypeptide reads, in one-letter code: Small ribosomal subunit protein uS15 (89 aa).

The protein belongs to the universal ribosomal protein uS15 family. As to quaternary structure, part of the 30S ribosomal subunit. Forms a bridge to the 50S subunit in the 70S ribosome, contacting the 23S rRNA.

Functionally, one of the primary rRNA binding proteins, it binds directly to 16S rRNA where it helps nucleate assembly of the platform of the 30S subunit by binding and bridging several RNA helices of the 16S rRNA. In terms of biological role, forms an intersubunit bridge (bridge B4) with the 23S rRNA of the 50S subunit in the ribosome. The protein is Small ribosomal subunit protein uS15 of Maridesulfovibrio salexigens (strain ATCC 14822 / DSM 2638 / NCIMB 8403 / VKM B-1763) (Desulfovibrio salexigens).